The sequence spans 1323 residues: Regulatory protein ADR1 (1323 aa).

Residue serine 54 is modified to Phosphoserine. C2H2-type zinc fingers lie at residues 104 to 126 and 132 to 155; these read FVCE…YRSH and YPCG…QKIH. The disordered stretch occupies residues 175-216; the sequence is KARKNSASSVKFQTPTYGTPDNGNFLNRTTANTRRKASPEAN. The segment covering 179–206 has biased composition (polar residues); the sequence is NSASSVKFQTPTYGTPDNGNFLNRTTAN. 2 positions are modified to phosphothreonine: threonine 188 and threonine 193. Position 230 is a phosphoserine; by PKA; in vitro (serine 230). At serine 258 the chain carries Phosphoserine. Residue threonine 259 is modified to Phosphothreonine. A phosphoserine mark is found at serine 299, serine 323, and serine 325. Position 327 is a phosphothreonine (threonine 327).

Phosphorylation at Ser-230 by cAMP-dependent protein kinase A does not affect DNA binding but appears to prevent transcription of ADH2 during glucose repression.

The protein resides in the nucleus. Its function is as follows. Required for transcriptional activation of glucose-repressible alcohol dehydrogenase (ADH2). This chain is Regulatory protein ADR1 (ADR1), found in Saccharomyces cerevisiae (strain ATCC 204508 / S288c) (Baker's yeast).